Consider the following 109-residue polypeptide: Thioredoxin 2 (109 aa).

In terms of domain architecture, Thioredoxin spans Ser-2–Gly-109. A disulfide bond links Cys-33 and Cys-36.

Belongs to the thioredoxin family.

Functionally, participates in various redox reactions through the reversible oxidation of its active center dithiol to a disulfide and catalyzes dithiol-disulfide exchange reactions. This chain is Thioredoxin 2 (trx2), found in Chlorobaculum tepidum (strain ATCC 49652 / DSM 12025 / NBRC 103806 / TLS) (Chlorobium tepidum).